A 1225-amino-acid chain; its full sequence is Hybrid signal transduction histidine kinase C (1225 aa).

A helical transmembrane segment spans residues 8–28 (GFLLSTLFFTIISIILFYFFI). Residues 313 to 356 (LSPRSLSSSSSSSPSSSNNNGNTNNSGSLSPRSSNSNGSAVSPR) are compositionally biased toward low complexity. Residues 313 to 407 (LSPRSLSSSS…SNGTISSPRT (95 aa)) form a disordered region. The segment covering 357 to 368 (NVSSNSMSPRGQ) has biased composition (polar residues). Low complexity predominate over residues 370–388 (SDRSISSPRGSSSSSSSSS). Polar residues predominate over residues 389-407 (NELAISPRNSNGTISSPRT). Positions 426-653 (HLSHELRTPI…TFHFVIPLET (228 aa)) constitute a Histidine kinase domain. H429 is subject to Phosphohistidine; by autocatalysis. The Response regulatory 1 domain maps to 669-784 (SVLVVDKNPY…HLVACLLASM (116 aa)). A 4-aspartylphosphate modification is found at D721. Disordered stretches follow at residues 809-832 (NNIN…SVYG), 941-974 (DDDS…DELN), and 1021-1076 (YLSP…PRAP). A compositionally biased stretch (polar residues) spans 945–954 (NNYCNTTGTM). Residues 1023-1037 (SPRSMNNNNGNNDNG) show a composition bias toward low complexity. Over residues 1058–1072 (TSDTSSLAQSPNSLS) the composition is skewed to polar residues. Residues 1078–1200 (KIMILDDNPV…CLELILRKWE (123 aa)) form the Response regulatory 2 domain. D1127 carries the post-translational modification 4-aspartylphosphate.

It is found in the membrane. The enzyme catalyses ATP + protein L-histidine = ADP + protein N-phospho-L-histidine.. Functionally, acts in a signal transduction pathway that regulates the slug versus culmination choice. Believed to be the first component of a phosphorelay that couples the sensing of ammonia to the modulation of PKA activity and hence activates culmination and spore germination. Ammonium transporters amtA and amtC are thought to respectively activate and inhibit dhkC phosphorelay. This protein probably undergoes an ATP-dependent autophosphorylation at conserved His residue in the kinase core, and a phosphoryl group is then transferred to a conserved aspartate residue in the receiver domain. This Dictyostelium discoideum (Social amoeba) protein is Hybrid signal transduction histidine kinase C (dhkC).